Reading from the N-terminus, the 289-residue chain is MDKVKIALQYMLPKHLLSRLVGKLAAAEAGTLTTAAIKWFIKQYKIDMSEAAQSEPQAYKSFNDFFTRALKPGIRPINQHTNIMVHPVDGAVSQLGPIKEGRIFQAKGHHYSSLTLLGDQVQDAKRFEGGDFATIYLAPKDYHRIHMPIKGTLSKMTYVPGELFSVNPLTARHVPGLFARNERVVAIFETEHGPLAMVLVGATIVASIETVWAGTITPPTGKQVFTWEYPTVGPDAITLDKGDEMGRFKLGSTVVMLFAKDAIDTFAEGVEAEAVTRMGQAFANLNNPK.

Active-site charge relay system; for autoendoproteolytic cleavage activity residues include aspartate 89, histidine 146, and serine 252. The Schiff-base intermediate with substrate; via pyruvic acid; for decarboxylase activity role is filled by serine 252. Serine 252 carries the post-translational modification Pyruvic acid (Ser); by autocatalysis.

It belongs to the phosphatidylserine decarboxylase family. PSD-B subfamily. Prokaryotic type I sub-subfamily. As to quaternary structure, heterodimer of a large membrane-associated beta subunit and a small pyruvoyl-containing alpha subunit. Requires pyruvate as cofactor. Is synthesized initially as an inactive proenzyme. Formation of the active enzyme involves a self-maturation process in which the active site pyruvoyl group is generated from an internal serine residue via an autocatalytic post-translational modification. Two non-identical subunits are generated from the proenzyme in this reaction, and the pyruvate is formed at the N-terminus of the alpha chain, which is derived from the carboxyl end of the proenzyme. The autoendoproteolytic cleavage occurs by a canonical serine protease mechanism, in which the side chain hydroxyl group of the serine supplies its oxygen atom to form the C-terminus of the beta chain, while the remainder of the serine residue undergoes an oxidative deamination to produce ammonia and the pyruvoyl prosthetic group on the alpha chain. During this reaction, the Ser that is part of the protease active site of the proenzyme becomes the pyruvoyl prosthetic group, which constitutes an essential element of the active site of the mature decarboxylase.

The protein localises to the cell membrane. It catalyses the reaction a 1,2-diacyl-sn-glycero-3-phospho-L-serine + H(+) = a 1,2-diacyl-sn-glycero-3-phosphoethanolamine + CO2. It functions in the pathway phospholipid metabolism; phosphatidylethanolamine biosynthesis; phosphatidylethanolamine from CDP-diacylglycerol: step 2/2. Its function is as follows. Catalyzes the formation of phosphatidylethanolamine (PtdEtn) from phosphatidylserine (PtdSer). This chain is Phosphatidylserine decarboxylase proenzyme, found in Shewanella putrefaciens (strain CN-32 / ATCC BAA-453).